Here is a 369-residue protein sequence, read N- to C-terminus: Allantoicase (369 aa).

A disordered region spans residues 341 to 369 (PDSKNNNNNNNNNNNNNTSNSFKTSDRQQ). Residues 345–357 (NNNNNNNNNNNNN) are compositionally biased toward low complexity.

It belongs to the allantoicase family.

The enzyme catalyses allantoate + H2O = (S)-ureidoglycolate + urea. It functions in the pathway nitrogen metabolism; (S)-allantoin degradation; (S)-ureidoglycolate from allantoate (aminidohydrolase route): step 1/1. Functionally, utilization of purines as secondary nitrogen sources, when primary sources are limiting. This is Allantoicase (allC) from Dictyostelium discoideum (Social amoeba).